We begin with the raw amino-acid sequence, 122 residues long: MARIAGVDLPRGKRVDIALTYIYGIGRTTAMKILDTTGVNWERSIDDLSADEVNEIRKELEQHYKVEGDLRREVSSNIKRLMDIGCYRGLRHRRGLPVHGQRTHTNARTRKGPRRGAVGKKK.

The interval 95 to 122 (GLPVHGQRTHTNARTRKGPRRGAVGKKK) is disordered.

The protein belongs to the universal ribosomal protein uS13 family. In terms of assembly, part of the 30S ribosomal subunit. Forms a loose heterodimer with protein S19. Forms two bridges to the 50S subunit in the 70S ribosome.

Located at the top of the head of the 30S subunit, it contacts several helices of the 16S rRNA. In the 70S ribosome it contacts the 23S rRNA (bridge B1a) and protein L5 of the 50S subunit (bridge B1b), connecting the 2 subunits; these bridges are implicated in subunit movement. Contacts the tRNAs in the A and P-sites. The chain is Small ribosomal subunit protein uS13 from Desulfovibrio desulfuricans (strain ATCC 27774 / DSM 6949 / MB).